The following is a 100-amino-acid chain: Putative pterin-4-alpha-carbinolamine dehydratase (100 aa).

Belongs to the pterin-4-alpha-carbinolamine dehydratase family.

It catalyses the reaction (4aS,6R)-4a-hydroxy-L-erythro-5,6,7,8-tetrahydrobiopterin = (6R)-L-erythro-6,7-dihydrobiopterin + H2O. The protein is Putative pterin-4-alpha-carbinolamine dehydratase of Bradyrhizobium diazoefficiens (strain JCM 10833 / BCRC 13528 / IAM 13628 / NBRC 14792 / USDA 110).